A 221-amino-acid chain; its full sequence is MRILLAEDDLLLGDGIRAGLRLEGDTVEWVTDGVAAENALVTDEFDLLVLDIGLPRRSGLDILRNLRHQGLLTPVLLLTARDKVADRVAGLDSGADDYLTKPFDLDELQARVRALTRRTTGRALPQLVHGELRLDPATHQVTLSGQAVELAPREYALLRLLLENSGKVLSRNQLEQSLYGWSGDVESNAIEVHVHHLRRKLGNQLIRTVRGIGYGIDQPAP.

One can recognise a Response regulatory domain in the interval 2–116 (RILLAEDDLL…ELQARVRALT (115 aa)). 4-aspartylphosphate is present on D51. A DNA-binding region (ompR/PhoB-type) is located at residues 124–218 (LPQLVHGELR…VRGIGYGIDQ (95 aa)).

It localises to the cytoplasm. Functionally, member of the two-component regulatory system PmrA/PmrB that plays a role in the regulation of resistance towards polymyxin B and cationic antimicrobial peptides in response to limiting concentrations of Mg(2+). Functions as a transcriptional activator by direct binding to a cis-acting sequence upstream of the target gene promoters including lipase lipA and pmrH promoters. Also autoregulates its own pmrAB operon under Mg(2+)-limiting conditions. This chain is Response regulator protein PmrA (pmrA), found in Pseudomonas aeruginosa (strain ATCC 15692 / DSM 22644 / CIP 104116 / JCM 14847 / LMG 12228 / 1C / PRS 101 / PAO1).